We begin with the raw amino-acid sequence, 402 residues long: 4-hydroxy-3-methylbut-2-enyl diphosphate reductase (402 aa).

Position 66 (cysteine 66) interacts with [4Fe-4S] cluster. Histidine 96 contacts (2E)-4-hydroxy-3-methylbut-2-enyl diphosphate. Dimethylallyl diphosphate is bound at residue histidine 96. Histidine 96 is an isopentenyl diphosphate binding site. Residue cysteine 157 coordinates [4Fe-4S] cluster. Histidine 185 serves as a coordination point for (2E)-4-hydroxy-3-methylbut-2-enyl diphosphate. Histidine 185 provides a ligand contact to dimethylallyl diphosphate. Residue histidine 185 participates in isopentenyl diphosphate binding. The active-site Proton donor is glutamate 187. Threonine 250 provides a ligand contact to (2E)-4-hydroxy-3-methylbut-2-enyl diphosphate. Residue cysteine 288 coordinates [4Fe-4S] cluster. 4 residues coordinate (2E)-4-hydroxy-3-methylbut-2-enyl diphosphate: serine 317, serine 318, asparagine 319, and serine 379. Dimethylallyl diphosphate is bound by residues serine 317, serine 318, asparagine 319, and serine 379. Serine 317, serine 318, asparagine 319, and serine 379 together coordinate isopentenyl diphosphate.

It belongs to the IspH family. [4Fe-4S] cluster is required as a cofactor.

The catalysed reaction is isopentenyl diphosphate + 2 oxidized [2Fe-2S]-[ferredoxin] + H2O = (2E)-4-hydroxy-3-methylbut-2-enyl diphosphate + 2 reduced [2Fe-2S]-[ferredoxin] + 2 H(+). It catalyses the reaction dimethylallyl diphosphate + 2 oxidized [2Fe-2S]-[ferredoxin] + H2O = (2E)-4-hydroxy-3-methylbut-2-enyl diphosphate + 2 reduced [2Fe-2S]-[ferredoxin] + 2 H(+). It participates in isoprenoid biosynthesis; dimethylallyl diphosphate biosynthesis; dimethylallyl diphosphate from (2E)-4-hydroxy-3-methylbutenyl diphosphate: step 1/1. The protein operates within isoprenoid biosynthesis; isopentenyl diphosphate biosynthesis via DXP pathway; isopentenyl diphosphate from 1-deoxy-D-xylulose 5-phosphate: step 6/6. Its function is as follows. Catalyzes the conversion of 1-hydroxy-2-methyl-2-(E)-butenyl 4-diphosphate (HMBPP) into a mixture of isopentenyl diphosphate (IPP) and dimethylallyl diphosphate (DMAPP). Acts in the terminal step of the DOXP/MEP pathway for isoprenoid precursor biosynthesis. The polypeptide is 4-hydroxy-3-methylbut-2-enyl diphosphate reductase (Gloeothece citriformis (strain PCC 7424) (Cyanothece sp. (strain PCC 7424))).